The sequence spans 151 residues: 3-hydroxyacyl-[acyl-carrier-protein] dehydratase FabZ (151 aa).

Histidine 54 is an active-site residue.

This sequence belongs to the thioester dehydratase family. FabZ subfamily.

It is found in the cytoplasm. The enzyme catalyses a (3R)-hydroxyacyl-[ACP] = a (2E)-enoyl-[ACP] + H2O. Functionally, involved in unsaturated fatty acids biosynthesis. Catalyzes the dehydration of short chain beta-hydroxyacyl-ACPs and long chain saturated and unsaturated beta-hydroxyacyl-ACPs. This Klebsiella pneumoniae (strain 342) protein is 3-hydroxyacyl-[acyl-carrier-protein] dehydratase FabZ.